The primary structure comprises 832 residues: Thymine dioxygenase JBP1-A (832 aa).

The span at 1-12 (MKQKRGKQDVKM) shows a compositional bias: basic and acidic residues. Residues 1–24 (MKQKRGKQDVKMLESAPPQLLPKK) form a disordered region. Residues 80-282 (VVGGVFLPGA…RLTCVCYYRA (203 aa)) are thymine dioxygenase. His207, Asp209, and His257 together coordinate Fe cation. Arg273 contributes to the 2-oxoglutarate binding site. Residues 409–578 (LGGALKAAEE…IEEARRRGSS (170 aa)) form a DNA-binding JBP1 domain region.

Belongs to the TET family. JBP1 subfamily. In terms of assembly, monomer. Binds to DNA as a monomer. Fe(2+) is required as a cofactor.

Its subcellular location is the nucleus. It catalyses the reaction thymine + 2-oxoglutarate + O2 = 5-hydroxymethyluracil + succinate + CO2. In terms of biological role, dioxygenase that catalyzes the first step of DNA base J (beta-d-glucosyl-HOMedU) biosynthesis by converting thymine to 5-hydroxymethyluracil (HOMedU). DNA base J is a hypermodified thymidine residue found in the genome of kinetoplastid parasites, which is localized primarily to repetitive DNA, namely the telomeres, and is implicated in the regulation of antigenic variation. Also specifically binds to base J-containing DNA (J-DNA). Involved in propagation and maintenance of DNA base J synthesis initiated by JBP2 by specifically binding already synthesized DNA base J and propagating J synthesis. Thymine dioxygenase activity and J-DNA-binding are independent functions. This is Thymine dioxygenase JBP1-A (JBP1A) from Trypanosoma cruzi (strain CL Brener).